Consider the following 394-residue polypeptide: Probable nucleoredoxin 2 (394 aa).

Thioredoxin domains are found at residues 15–176 (GVGG…QTLE) and 180–327 (SVSG…EMED).

This sequence belongs to the nucleoredoxin family.

The enzyme catalyses [protein]-dithiol + NAD(+) = [protein]-disulfide + NADH + H(+). It catalyses the reaction [protein]-dithiol + NADP(+) = [protein]-disulfide + NADPH + H(+). Its function is as follows. Probable thiol-disulfide oxidoreductase that may participate in various redox reactions. The polypeptide is Probable nucleoredoxin 2 (Oryza sativa subsp. japonica (Rice)).